Reading from the N-terminus, the 600-residue chain is Elongation factor 4 (600 aa).

The tr-type G domain maps to 6–188; it reads KLIRNFSIIA…AVVERIPAPK (183 aa). GTP-binding positions include 18–23 and 135–138; these read DHGKST and NKID.

The protein belongs to the TRAFAC class translation factor GTPase superfamily. Classic translation factor GTPase family. LepA subfamily.

It localises to the cell inner membrane. It carries out the reaction GTP + H2O = GDP + phosphate + H(+). Its function is as follows. Required for accurate and efficient protein synthesis under certain stress conditions. May act as a fidelity factor of the translation reaction, by catalyzing a one-codon backward translocation of tRNAs on improperly translocated ribosomes. Back-translocation proceeds from a post-translocation (POST) complex to a pre-translocation (PRE) complex, thus giving elongation factor G a second chance to translocate the tRNAs correctly. Binds to ribosomes in a GTP-dependent manner. This chain is Elongation factor 4, found in Sorangium cellulosum (strain So ce56) (Polyangium cellulosum (strain So ce56)).